A 462-amino-acid chain; its full sequence is Multidrug resistance protein NorM (462 aa).

Helical transmembrane passes span 56-76, 99-119, 147-167, 172-192, 202-222, 247-267, 280-300, 325-345, 361-381, 402-422, and 430-450; these read LAAGGLGANFFFVIVTVLQGV, IYWTGFVLSVLLAIPAVVALS, FAALGSLIGVGLMRAFLPAIG, LLWVSIGGIGVNAVLNYGLIH, FLGSAVATTITIWLTAFALIW, LIGIGWPVAITYGVESTLFLA, LAAHQIALNVASVAFMVPLAI, FVALGLGVAFMSLSGLVLILA, NAATVSLAASLLGIAAVFQIV, MLAATFGYWGIGFPTGYWLAF, and GLWWGLAAGLASVAVLMAWRF.

This sequence belongs to the multi antimicrobial extrusion (MATE) (TC 2.A.66.1) family.

It is found in the cell inner membrane. In terms of biological role, multidrug efflux pump. Confers probably resistance to the cationic peptide polymyxin B (PMB). This chain is Multidrug resistance protein NorM (norM), found in Burkholderia vietnamiensis.